The chain runs to 121 residues: Large ribosomal subunit protein eL8 (121 aa).

It belongs to the eukaryotic ribosomal protein eL8 family. Part of the 50S ribosomal subunit. Probably part of the RNase P complex.

Its subcellular location is the cytoplasm. Functionally, multifunctional RNA-binding protein that recognizes the K-turn motif in ribosomal RNA, the RNA component of RNase P, box H/ACA, box C/D and box C'/D' sRNAs. In Thermoplasma acidophilum (strain ATCC 25905 / DSM 1728 / JCM 9062 / NBRC 15155 / AMRC-C165), this protein is Large ribosomal subunit protein eL8.